The sequence spans 470 residues: 3-isopropylmalate dehydratase large subunit (470 aa).

Cys351, Cys411, and Cys414 together coordinate [4Fe-4S] cluster.

Belongs to the aconitase/IPM isomerase family. LeuC type 1 subfamily. Heterodimer of LeuC and LeuD. It depends on [4Fe-4S] cluster as a cofactor.

It catalyses the reaction (2R,3S)-3-isopropylmalate = (2S)-2-isopropylmalate. The protein operates within amino-acid biosynthesis; L-leucine biosynthesis; L-leucine from 3-methyl-2-oxobutanoate: step 2/4. In terms of biological role, catalyzes the isomerization between 2-isopropylmalate and 3-isopropylmalate, via the formation of 2-isopropylmaleate. This chain is 3-isopropylmalate dehydratase large subunit, found in Rhodopseudomonas palustris (strain BisB5).